The chain runs to 341 residues: UDP-3-O-acylglucosamine N-acyltransferase (341 aa).

Catalysis depends on His241, which acts as the Proton acceptor.

This sequence belongs to the transferase hexapeptide repeat family. LpxD subfamily. Homotrimer.

It catalyses the reaction a UDP-3-O-[(3R)-3-hydroxyacyl]-alpha-D-glucosamine + a (3R)-hydroxyacyl-[ACP] = a UDP-2-N,3-O-bis[(3R)-3-hydroxyacyl]-alpha-D-glucosamine + holo-[ACP] + H(+). Its pathway is bacterial outer membrane biogenesis; LPS lipid A biosynthesis. Functionally, catalyzes the N-acylation of UDP-3-O-acylglucosamine using 3-hydroxyacyl-ACP as the acyl donor. Is involved in the biosynthesis of lipid A, a phosphorylated glycolipid that anchors the lipopolysaccharide to the outer membrane of the cell. The chain is UDP-3-O-acylglucosamine N-acyltransferase from Haemophilus ducreyi (strain 35000HP / ATCC 700724).